The sequence spans 28 residues: Sarcolamban A (28 aa).

Residues 7–27 traverse the membrane as a helical segment; it reads LFTTFGILAILLFFLYLIYAV.

Interacts with SERCA. As to expression, strongly expressed in embryonic and larval somatic muscles and postembryonic heart.

The protein localises to the sarcoplasmic reticulum membrane. It localises to the cell membrane. It is found in the sarcolemma. Its subcellular location is the T-tubule. Plays an essential role in the regulation of calcium transport at the sarcoplasmic reticulum (SR), which is secondarily required for regular muscle contraction. The polypeptide is Sarcolamban A (Drosophila melanogaster (Fruit fly)).